The sequence spans 1576 residues: Proton channel OtopLc (1576 aa).

2 disordered regions span residues 1–602 (MDSS…SSPP) and 621–736 (QIGS…SSPV). 2 stretches are compositionally biased toward low complexity: residues 58-67 (SLAEEVLLLV) and 76-85 (LLGQPLPTLT). 4 stretches are compositionally biased toward acidic residues: residues 103-116 (DEGD…EPVP), 159-171 (DDGE…DAEE), 186-198 (SNPD…EEQE), and 206-216 (PKEEDEEEDDD). The span at 219–228 (TPPPPLPPLP) shows a compositional bias: pro residues. Over residues 229 to 241 (SNFSYVQGHNLGQ) the composition is skewed to polar residues. N-linked (GlcNAc...) asparagine glycosylation occurs at N230. Residues 243 to 252 (TPPLTKSPSN) are compositionally biased toward low complexity. The span at 253–264 (SPSPPVTPPPCP) shows a compositional bias: pro residues. N-linked (GlcNAc...) asparagine glycosylation occurs at N267. Acidic residues predominate over residues 316-341 (DQPEPEDQPPEPENEPEPEPEPEPEP). A compositionally biased stretch (basic and acidic residues) spans 347 to 356 (AREDYSRSLD). Over residues 362-376 (TTITTPPSNGYSASS) the composition is skewed to polar residues. The segment covering 384 to 393 (HFAELDEDRG) has biased composition (basic and acidic residues). A compositionally biased stretch (acidic residues) spans 402–419 (QEPEEEVEEEEEEEEEEL). The segment covering 420-433 (TKETDEISVDRESL) has biased composition (basic and acidic residues). Polar residues predominate over residues 434–457 (QDQGGDSISSPRPASILTGSISTS). A compositionally biased stretch (low complexity) spans 465-507 (SPKPESRGPSRSGSQRSQLRSGSQQGSIAESRGGSRIGSRTGS). Composition is skewed to polar residues over residues 519-534 (PQAS…SQGQ) and 545-555 (KSGSQRMQSPQ). Residues 563-575 (MPSPPLMRSPPPE) show a composition bias toward pro residues. Residues 661–685 (AAAAPAVTTTAATTAVTSQPRSHFT) show a composition bias toward low complexity. Residues 686 to 709 (SSHHHYHLPHQFQHPHHQNHHTHS) show a composition bias toward basic residues. A helical transmembrane segment spans residues 741 to 761 (LFMAGVAPPIAAGAGSLMAMP). The disordered stretch occupies residues 771–845 (GRVSARSGSQ…GSSSQPALSG (75 aa)). The span at 776–799 (RSGSQHHVTIDESSLPSHKGNIQE) shows a compositional bias: polar residues. A compositionally biased stretch (low complexity) spans 826 to 839 (DSSDPPSSPGGSSS). A run of 2 helical transmembrane segments spans residues 891 to 911 (ALAT…GIAF) and 931 to 951 (LYLY…LIWG). Residues 962 to 973 (PSKSATKASGTD) are compositionally biased toward polar residues. Positions 962-1001 (PSKSATKASGTDSMDESDTDSNSVHHRLPPPIPVRRPSLL) are disordered. 3 consecutive transmembrane segments (helical) span residues 1019-1039 (GAVA…GQYF), 1051-1071 (LLAL…YFIF), and 1084-1104 (IIAR…WLNV). N-linked (GlcNAc...) asparagine glycosylation occurs at N1121. The next 7 membrane-spanning stretches (helical) occupy residues 1179 to 1199 (FLFP…YVMW), 1239 to 1259 (FVGI…FVLI), 1272 to 1292 (VTIC…VGMI), 1310 to 1330 (ILLV…VIAG), 1340 to 1360 (LVPI…MFIL), 1381 to 1401 (IVTF…LEKS), and 1412 to 1432 (FYGL…AIFY). The N-linked (GlcNAc...) asparagine glycan is linked to N1479. The disordered stretch occupies residues 1498-1549 (EEVDSGESNSAEDAGAGAGSGGSRGSGGGAGAAEAGEAGEEGQQGGDSSCGL). The segment covering 1503–1512 (GESNSAEDAG) has biased composition (low complexity). Residues 1513–1528 (AGAGSGGSRGSGGGAG) are compositionally biased toward gly residues.

This sequence belongs to the otopetrin family.

It localises to the cell membrane. Functionally, proton-selective channel that specifically transports protons into cells. Proton-selective channel activity is probably required in cell types that use changes in intracellular pH for cell signaling or to regulate biochemical or developmental processes. This chain is Proton channel OtopLc, found in Drosophila melanogaster (Fruit fly).